The following is a 137-amino-acid chain: Putative pre-16S rRNA nuclease (137 aa).

It belongs to the YqgF nuclease family.

It localises to the cytoplasm. Functionally, could be a nuclease involved in processing of the 5'-end of pre-16S rRNA. The sequence is that of Putative pre-16S rRNA nuclease from Bacillus mycoides (strain KBAB4) (Bacillus weihenstephanensis).